Here is a 1537-residue protein sequence, read N- to C-terminus: Leucine-rich repeat-containing protein 7 (1537 aa).

17 LRR repeats span residues 23 to 44 (IISVLDYSHCSLQQVPKEVFNF), 47 to 68 (TLEELYLDANQIEELPKQLFNC), 70 to 91 (ALRKLSIPDNDLSNLPTTIASL), 93 to 114 (NLKELDISKNGVQEFPENIKCC), 116 to 137 (CLTIIEASVNPISKLPDGFTQL), 139 to 161 (NLTQLYLNDAFLEFLPANFGRLV), 162 to 183 (KLRILELRENHLKTLPKSMHKL), 185 to 206 (QLERLDLGNNEFGELPEVLDQI), 208 to 229 (NLRELWMDNNALQVLPGSIGKL), 231 to 253 (MLVYLDMSKNRIETVDMDISGCE), 254 to 275 (ALEDLLLSSNMLQQLPDSIGLL), 277 to 298 (KLTTLKVDDNQLTMLPNTIGNL), 300 to 321 (LLEEFDCSCNELESLPSTIGYL), 323 to 344 (SLRTLAVDENFLPELPREIGSC), 346 to 367 (NVTVMSLRSNKLEFLPEEIGQM), 369 to 391 (KLRVLNLSDNRLKNLPFSFTKLK), and 392 to 413 (ELAALWLSDNQSKALIPLQTEA). Ser-439, Ser-441, and Ser-443 each carry phosphoserine. Over residues 663 to 676 (KKESTDESEVDKTH) the composition is skewed to basic and acidic residues. Disordered stretches follow at residues 663-709 (KKES…VGSL), 730-759 (FPQPLDSKPLLSQREAVPPGNIPQRPDRLP), 786-810 (AENANSNPLLSSKSRSTSSHGRRPL), and 824-892 (EQST…SPGV). Polar residues predominate over residues 677–709 (CLNNSVSSGTYSDYSPSQASSGSSNTRVKVGSL). Low complexity predominate over residues 790-804 (NSNPLLSSKSRSTSS). The residue at position 831 (Thr-831) is a Phosphothreonine. A Phosphoserine modification is found at Ser-850. Positions 859–871 (PSKLETTPTTSPL) are enriched in low complexity. Residue Thr-865 is modified to Phosphothreonine. Ser-869 is modified (phosphoserine). The span at 872–882 (PERKEHIKEST) shows a compositional bias: basic and acidic residues. Phosphoserine is present on residues Ser-947, Ser-949, and Ser-1118. The tract at residues 1136–1159 (ELPPTDRYGRPPYRGGLDRQSSVT) is disordered. Arg-1149 carries the post-translational modification Omega-N-methylarginine. A Phosphoserine modification is found at Ser-1233. Disordered stretches follow at residues 1234 to 1265 (DYNLGNYGDKPSDNSDLKTRPTPVKGEESCGK) and 1331 to 1360 (QKTPSQQSNILDNGQEDVSPSGQWNPYPLG). Positions 1243-1263 (KPSDNSDLKTRPTPVKGEESC) are enriched in basic and acidic residues. Polar residues predominate over residues 1332 to 1354 (KTPSQQSNILDNGQEDVSPSGQW). Residues Ser-1335 and Ser-1439 each carry the phosphoserine modification. The PDZ domain occupies 1445–1535 (EQFCVRIEKN…TVDLVIQREL (91 aa)).

The protein belongs to the LAP (LRR and PDZ) protein family. Interacts with CNKSR2 and DLG4. Interacts with CTNND2/Catenin delta-2. Forms a complex with N-cadherin through CTNND2. Interacts with CAMK2A. In terms of tissue distribution, brain-specific. Isoform 3 is ubiquitously expressed.

The protein localises to the cytoplasm. The protein resides in the postsynaptic density. Required for normal synaptic spine architecture and function. Necessary for DISC1 and GRM5 localization to postsynaptic density complexes and for both N-methyl D-aspartate receptor-dependent and metabotropic glutamate receptor-dependent long term depression. In Homo sapiens (Human), this protein is Leucine-rich repeat-containing protein 7 (LRRC7).